Here is a 273-residue protein sequence, read N- to C-terminus: MMKRQFEDVTRIVIKIGTSSLVLPTGKINLEKIDQLAFVISSLMNKGKEVILVSSGAMGFGLDILKMEKRPTNLAKQQAVSSVGQVAMMSLYSQIFAHYQTNVSQILLTRDVVVFPESLANVTNAFESLISLGIVPIVNENDAVSVDEMDHATKFGDNDRLSAVVAGITKADLLIMLSDIDGLFDKNPTIYEDAQLRSHVAVVTQEIIASAGGAGSKFGTGGMLSKIQSAQMVFENKGQMVLMNGANPRDILRVLEGQPLGTWFKQIEEVTHD.

Lysine 15 contributes to the ATP binding site. Substrate is bound by residues serine 55, aspartate 142, and asparagine 158. ATP is bound by residues serine 178–aspartate 179 and threonine 220–lysine 226.

The protein belongs to the glutamate 5-kinase family.

It is found in the cytoplasm. It catalyses the reaction L-glutamate + ATP = L-glutamyl 5-phosphate + ADP. It functions in the pathway amino-acid biosynthesis; L-proline biosynthesis; L-glutamate 5-semialdehyde from L-glutamate: step 1/2. Functionally, catalyzes the transfer of a phosphate group to glutamate to form L-glutamate 5-phosphate. The sequence is that of Glutamate 5-kinase from Streptococcus pyogenes serotype M18 (strain MGAS8232).